Here is a 264-residue protein sequence, read N- to C-terminus: Thiazole synthase (264 aa).

Residue K106 is the Schiff-base intermediate with DXP of the active site. 1-deoxy-D-xylulose 5-phosphate is bound by residues G167, 193–194 (AG), and 215–216 (NT).

Belongs to the ThiG family. As to quaternary structure, homotetramer. Forms heterodimers with either ThiH or ThiS.

Its subcellular location is the cytoplasm. It carries out the reaction [ThiS sulfur-carrier protein]-C-terminal-Gly-aminoethanethioate + 2-iminoacetate + 1-deoxy-D-xylulose 5-phosphate = [ThiS sulfur-carrier protein]-C-terminal Gly-Gly + 2-[(2R,5Z)-2-carboxy-4-methylthiazol-5(2H)-ylidene]ethyl phosphate + 2 H2O + H(+). Its pathway is cofactor biosynthesis; thiamine diphosphate biosynthesis. Catalyzes the rearrangement of 1-deoxy-D-xylulose 5-phosphate (DXP) to produce the thiazole phosphate moiety of thiamine. Sulfur is provided by the thiocarboxylate moiety of the carrier protein ThiS. In vitro, sulfur can be provided by H(2)S. This chain is Thiazole synthase, found in Xanthomonas euvesicatoria pv. vesicatoria (strain 85-10) (Xanthomonas campestris pv. vesicatoria).